We begin with the raw amino-acid sequence, 127 residues long: MAYGVKIAKGDAYKRAAIKRRHIRIRKHISGTAERPRLVVTRSNRHIVAQVIDDVKGHTLASASTLDTTIRGGESDKSAQAKSVGALVAERAKAAGVEAVVFDRGGNQYAGRIAALADAAREAGLKF.

It belongs to the universal ribosomal protein uL18 family. As to quaternary structure, part of the 50S ribosomal subunit; part of the 5S rRNA/L5/L18/L25 subcomplex. Contacts the 5S and 23S rRNAs.

Its function is as follows. This is one of the proteins that bind and probably mediate the attachment of the 5S RNA into the large ribosomal subunit, where it forms part of the central protuberance. The chain is Large ribosomal subunit protein uL18 from Streptomyces avermitilis (strain ATCC 31267 / DSM 46492 / JCM 5070 / NBRC 14893 / NCIMB 12804 / NRRL 8165 / MA-4680).